Consider the following 331-residue polypeptide: UDP-galactose/UDP-glucose transporter 3 (331 aa).

A run of 8 helical transmembrane segments spans residues 11–31, 49–69, 80–100, 112–132, 135–155, 170–190, 206–226, and 245–265; these read VLLL…QGIL, HLAF…YIMI, APWW…AMGI, VLAK…VYGI, TLPE…FALL, APLG…TNAT, IMLG…FGLP, and WDIL…FLTI. The Di-lysine motif signature appears at 327–331; sequence KKKKA.

This sequence belongs to the nucleotide-sugar transporter family. UDP-galactose:UMP antiporter (TC 2.A.7.11) subfamily. As to expression, mostly expressed in flowers, and, to a lower extent, in roots, stems and leaves.

It localises to the endoplasmic reticulum membrane. The protein localises to the golgi apparatus membrane. In terms of biological role, essential sugar transporter required for the transport of UDP-glucose from the cytoplasm into the Golgi and the endoplasmic reticulum. Essential for pollen development and involved in embryo sac progress. The sequence is that of UDP-galactose/UDP-glucose transporter 3 from Arabidopsis thaliana (Mouse-ear cress).